The sequence spans 195 residues: Nucleoside triphosphate pyrophosphatase (195 aa).

Aspartate 76 functions as the Proton acceptor in the catalytic mechanism.

It belongs to the Maf family. A divalent metal cation is required as a cofactor.

It localises to the cytoplasm. It carries out the reaction a ribonucleoside 5'-triphosphate + H2O = a ribonucleoside 5'-phosphate + diphosphate + H(+). It catalyses the reaction a 2'-deoxyribonucleoside 5'-triphosphate + H2O = a 2'-deoxyribonucleoside 5'-phosphate + diphosphate + H(+). Functionally, nucleoside triphosphate pyrophosphatase. May have a dual role in cell division arrest and in preventing the incorporation of modified nucleotides into cellular nucleic acids. In Pelagibacter ubique (strain HTCC1062), this protein is Nucleoside triphosphate pyrophosphatase.